The chain runs to 399 residues: Accessory Sec system protein translocase subunit SecY2 (399 aa).

Transmembrane regions (helical) follow at residues 14 to 34, 60 to 80, 102 to 122, 128 to 148, 152 to 172, 184 to 204, 238 to 258, 272 to 292, 335 to 355, and 362 to 382; these read ILFT…SIVG, LNVF…IMLL, IITI…YIHN, SNII…VWLA, ITYG…KSLF, VLLL…LLFI, ISIM…NLIA, FANP…SYLL, WTGA…TLLV, and IYFS…GETI.

The protein belongs to the SecY/SEC61-alpha family. SecY2 subfamily. As to quaternary structure, component of the accessory SecA2/SecY2 protein translocase complex required to export cell wall proteins. May form heterotrimers with SecE and SecG subunits.

The protein resides in the cell membrane. Functionally, part of the accessory SecA2/SecY2 system specifically required for export of possible cell wall proteins. The central subunit of a protein translocation channel. This chain is Accessory Sec system protein translocase subunit SecY2, found in Staphylococcus haemolyticus (strain JCSC1435).